A 209-amino-acid polypeptide reads, in one-letter code: Protein bli-3 (209 aa).

The segment covering 1–11 (MSGQGFSNADT) has biased composition (polar residues). The disordered stretch occupies residues 1 to 24 (MSGQGFSNADTGNKPADPYKQANL).

The protein is Protein bli-3 (bli-3) of Neurospora crassa (strain ATCC 24698 / 74-OR23-1A / CBS 708.71 / DSM 1257 / FGSC 987).